The chain runs to 608 residues: Albumin (608 aa).

A signal peptide spans 1 to 18 (MKWVTFLLLLFVSGSAFS). The propeptide occupies 19–24 (RGVFRR). Albumin domains lie at 19–211 (RGVF…GVKE), 212–403 (KALV…EFQP), and 404–601 (LVEE…NLVT). His-27 contributes to the Cu cation binding site. Ser-29 is subject to Phosphoserine. Positions 30 and 37 each coordinate Ca(2+). A disulfide bridge links Cys-77 with Cys-86. A phosphoserine mark is found at Ser-82 and Ser-89. His-91 contacts Zn(2+). 6 disulfide bridges follow: Cys-99-Cys-115, Cys-114-Cys-125, Cys-148-Cys-193, Cys-192-Cys-201, Cys-224-Cys-270, and Cys-269-Cys-277. The residue at position 229 (Lys-229) is an N6-succinyllysine. Glu-268 provides a ligand contact to Ca(2+). Residues His-271 and Asp-273 each coordinate Zn(2+). Ca(2+)-binding residues include Asp-273, Glu-276, and Asp-279. Disulfide bonds link Cys-289/Cys-303, Cys-302/Cys-313, Cys-340/Cys-385, Cys-384/Cys-393, Cys-416/Cys-462, Cys-461/Cys-472, Cys-485/Cys-501, and Cys-500/Cys-511. Ser-297 carries the phosphoserine modification. At Ser-443 the chain carries Phosphoserine. Phosphothreonine is present on residues Thr-444 and Thr-446. N6-succinyllysine is present on Lys-460. A Phosphoserine modification is found at Ser-513. 2 cysteine pairs are disulfide-bonded: Cys-538-Cys-583 and Cys-582-Cys-591. Position 543 is an N6-succinyllysine (Lys-543). Lys-558 carries the post-translational modification N6-methyllysine. The residue at position 570 (Thr-570) is a Phosphothreonine. Lys-588 carries the post-translational modification N6-succinyllysine.

Belongs to the ALB/AFP/VDB family. In terms of assembly, part of a complex composed of complement component C3, CLCA1/CLCA3, A2ML1/OH and ALB/serum albumin. Interacts with FCGRT; this interaction regulates ALB homeostasis. Interacts with TASOR. In plasma, occurs in a covalently-linked complex with chromophore-bound alpha-1-microglobulin; this interaction does not prevent fatty acid binding to ALB. In terms of processing, phosphorylated by FAM20C in the extracellular medium. In terms of tissue distribution, plasma. Expressed in the granular cells within the cerebellum.

It is found in the secreted. Binds water, Ca(2+), Na(+), K(+), fatty acids, hormones, bilirubin and drugs. Its main function is the regulation of the colloidal osmotic pressure of blood. Major zinc transporter in plasma, typically binds about 80% of all plasma zinc. Major calcium and magnesium transporter in plasma, binds approximately 45% of circulating calcium and magnesium in plasma. Potentially has more than two calcium-binding sites and might additionally bind calcium in a non-specific manner. The shared binding site between zinc and calcium at residue Asp-273 suggests a crosstalk between zinc and calcium transport in the blood. The rank order of affinity is zinc &gt; calcium &gt; magnesium. Binds to the bacterial siderophore enterobactin and inhibits enterobactin-mediated iron uptake of E.coli from ferric transferrin, and may thereby limit the utilization of iron and growth of enteric bacteria such as E.coli. Does not prevent iron uptake by the bacterial siderophore aerobactin. This Mus musculus (Mouse) protein is Albumin (Alb).